The primary structure comprises 95 residues: MKLVFLFLLVTIPICCYASGSGCSILDEVIRGTINSTVTLHDYMKLVKPYVHDHFTANAVKQFKQCFLDQTNKTVENVGVMTEAIFNSESCQQPS.

The signal sequence occupies residues 1-18 (MKLVFLFLLVTIPICCYA). Asparagine 35 and asparagine 72 each carry an N-linked (GlcNAc...) asparagine glycan.

It belongs to the secretoglobin family. Lipophilin subfamily. In terms of assembly, prostatein is composed of three different peptides called C1, C2 and C3. These form covalent C1:C3 (F) and C2:C3 (S) heterodimers whose non-covalent association forms tetrameric (C1:C3/C3:C2) prostatein molecules. In terms of tissue distribution, expressed at very low level in ventral prostate.

Its subcellular location is the secreted. Part of prostatein which is the major secretory glycoprotein of ventral prostate gland. Steroid-binding protein; can bind non-polar steroids, cholesterol and a group of small proline-rich peptides. The sequence is that of Secretoglobin family 2A member 1 from Rattus norvegicus (Rat).